The primary structure comprises 115 residues: Large ribosomal subunit protein bL20c (115 aa).

This sequence belongs to the bacterial ribosomal protein bL20 family.

The protein localises to the plastid. It is found in the organellar chromatophore. Its function is as follows. Binds directly to 23S ribosomal RNA and is necessary for the in vitro assembly process of the 50S ribosomal subunit. It is not involved in the protein synthesizing functions of that subunit. The protein is Large ribosomal subunit protein bL20c of Paulinella chromatophora.